We begin with the raw amino-acid sequence, 613 residues long: Transcription factor MTB1 (613 aa).

The segment at 48–130 (LQNKLSDLVE…RVLQKLHMLF (83 aa)) is JAZ-interaction domain. 2 disordered regions span residues 256–285 (EKNE…FGHD) and 391–441 (AHNV…AERQ). Over residues 260 to 270 (GNNPRLSNSGA) the composition is skewed to polar residues. Composition is skewed to basic and acidic residues over residues 394-417 (VESE…DEKR) and 427-441 (NGRE…AERQ). The basic motif; degenerate stretch occupies residues 430–443 (EEPLNHVEAERQRR). The 50-residue stretch at 430 to 479 (EEPLNHVEAERQRREKLNQRFYALRAVVPNISKMDKASLLGDAIAYITEL) folds into the bHLH domain. The tract at residues 444-479 (EKLNQRFYALRAVVPNISKMDKASLLGDAIAYITEL) is helix-loop-helix motif. Positions 490-513 (RELRLGSTSRDAITSEDSPSSEIQ) are disordered. The span at 495–512 (GSTSRDAITSEDSPSSEI) shows a compositional bias: polar residues.

Interacts with MYC2 (via N-terminus). MTB1 competes with MED25 for binding to MYC2. Interacts (via N-terminus) with JAZ7.

The protein localises to the nucleus. Functionally, transcription factor that negatively regulates jasmonate (JA) signaling. Negatively regulates JA-dependent response to wounding, JA-induced expression of defense genes, JA-dependent responses against herbivorous insects, and JA-dependent resistance against Botrytis cinerea infection. Plays a positive role in resistance against the bacterial pathogen Pseudomonas syringae pv tomato DC3000. This Solanum lycopersicum (Tomato) protein is Transcription factor MTB1.